The chain runs to 208 residues: Small ribosomal subunit protein uS4 (208 aa).

Positions 29 to 48 (MERRPYGPGQHGRARRKQDS) are disordered. Residues 95 to 155 (QRLDALVLRA…ERSEKMVPFQ (61 aa)) form the S4 RNA-binding domain.

It belongs to the universal ribosomal protein uS4 family. Part of the 30S ribosomal subunit. Contacts protein S5. The interaction surface between S4 and S5 is involved in control of translational fidelity.

Functionally, one of the primary rRNA binding proteins, it binds directly to 16S rRNA where it nucleates assembly of the body of the 30S subunit. With S5 and S12 plays an important role in translational accuracy. The sequence is that of Small ribosomal subunit protein uS4 from Micrococcus luteus (strain ATCC 4698 / DSM 20030 / JCM 1464 / CCM 169 / CCUG 5858 / IAM 1056 / NBRC 3333 / NCIMB 9278 / NCTC 2665 / VKM Ac-2230) (Micrococcus lysodeikticus).